We begin with the raw amino-acid sequence, 125 residues long: Translation initiation factor 5A (125 aa).

A Hypusine modification is found at lysine 35.

The protein belongs to the eIF-5A family.

Its subcellular location is the cytoplasm. Functions by promoting the formation of the first peptide bond. In Methanoregula boonei (strain DSM 21154 / JCM 14090 / 6A8), this protein is Translation initiation factor 5A (eIF5A).